The primary structure comprises 179 residues: ATP-dependent protease subunit HslV (179 aa).

Thr5 is an active-site residue. Na(+)-binding residues include Gly164, Cys167, and Thr170.

This sequence belongs to the peptidase T1B family. HslV subfamily. As to quaternary structure, a double ring-shaped homohexamer of HslV is capped on each side by a ring-shaped HslU homohexamer. The assembly of the HslU/HslV complex is dependent on binding of ATP.

Its subcellular location is the cytoplasm. The enzyme catalyses ATP-dependent cleavage of peptide bonds with broad specificity.. Allosterically activated by HslU binding. In terms of biological role, protease subunit of a proteasome-like degradation complex believed to be a general protein degrading machinery. The chain is ATP-dependent protease subunit HslV from Verminephrobacter eiseniae (strain EF01-2).